A 403-amino-acid chain; its full sequence is S-adenosylmethionine synthase (403 aa).

Residue H16 participates in ATP binding. D18 contacts Mg(2+). E44 is a binding site for K(+). L-methionine contacts are provided by E57 and Q100. A flexible loop region spans residues 100 to 110 (QSPDIAQGVDR). Residues 106 to 126 (QGVDRSYESRSGSASTDAHDL) form a disordered region. Residues 176–178 (DGK), 248–249 (KF), D257, 263–264 (RK), A280, and K284 each bind ATP. D257 lines the L-methionine pocket. K288 serves as a coordination point for L-methionine.

The protein belongs to the AdoMet synthase family. As to quaternary structure, homotetramer; dimer of dimers. Mg(2+) is required as a cofactor. Requires K(+) as cofactor.

It localises to the cytoplasm. It carries out the reaction L-methionine + ATP + H2O = S-adenosyl-L-methionine + phosphate + diphosphate. It participates in amino-acid biosynthesis; S-adenosyl-L-methionine biosynthesis; S-adenosyl-L-methionine from L-methionine: step 1/1. Its function is as follows. Catalyzes the formation of S-adenosylmethionine (AdoMet) from methionine and ATP. The overall synthetic reaction is composed of two sequential steps, AdoMet formation and the subsequent tripolyphosphate hydrolysis which occurs prior to release of AdoMet from the enzyme. The polypeptide is S-adenosylmethionine synthase (Clavibacter sepedonicus (Clavibacter michiganensis subsp. sepedonicus)).